Here is a 391-residue protein sequence, read N- to C-terminus: G-patch domain-containing protein 1 (391 aa).

The region spanning 15–61 is the G-patch domain; the sequence is KDSAAFKLMKSMGWEEGEGLGKDKQGIKGYVRVTNKQDTSGVGLDKP. 2 disordered regions span residues 80–132 and 212–307; these read VQAA…EKGK and KASE…PAKR. Composition is skewed to acidic residues over residues 92 to 102 and 265 to 295; these read DDSDKEDESED and NSDDDDDDDDDDDEEDEEEDEDESEADDDDK. Residues 305 to 312 carry the Nuclear localization signal motif; the sequence is AKRKHDEI.

Strongly expressed in tissues with high cell proliferation activity that have a high demand for ribosome production such as shoot tips, leaves primordia, root tips and floral buds.

Its subcellular location is the nucleus. The protein resides in the nucleolus. In terms of biological role, involved in ribosome biogenesis, required for normal progression of rRNA processing. Seems to promote cell proliferation in leaves. The sequence is that of G-patch domain-containing protein 1 from Arabidopsis thaliana (Mouse-ear cress).